A 417-amino-acid polypeptide reads, in one-letter code: Probable phosphoglycerate kinase (417 aa).

14 residues coordinate (2R)-3-phosphoglycerate: Val23, Asp24, Phe25, Asn26, Gln38, Arg39, Ser62, His63, Gly65, Arg66, Leu121, Arg122, His169, and Arg170. Position 213 (Gly213) interacts with ADP. Gly213 contributes to the CDP binding site. AMP contacts are provided by Ala214 and Lys215. Position 214 (Ala214) interacts with ATP. Ala214 lines the Mg(2+) pocket. Residues Ala217 and Asp218 each coordinate Mg(2+). Asp218 provides a ligand contact to CDP. Lys219 lines the AMP pocket. Lys219 is a binding site for ATP. Residue Gly237 coordinates ADP. A CDP-binding site is contributed by Gly237. Gly238 and Gly312 together coordinate AMP. Gly238 and Gly312 together coordinate ATP. CDP contacts are provided by Gly337, Ala339, and Phe342. Phe342 is a binding site for ADP. Glu343 lines the AMP pocket. 3 residues coordinate ATP: Glu343, Asp374, and Thr375. Asp374 lines the Mg(2+) pocket.

It belongs to the phosphoglycerate kinase family. In terms of assembly, monomer. The cofactor is Mg(2+).

It is found in the cytoplasm. It carries out the reaction (2R)-3-phosphoglycerate + ATP = (2R)-3-phospho-glyceroyl phosphate + ADP. Its pathway is carbohydrate degradation; glycolysis; pyruvate from D-glyceraldehyde 3-phosphate: step 2/5. This is Probable phosphoglycerate kinase (pgk-1) from Caenorhabditis elegans.